The chain runs to 683 residues: DNA-directed RNA polymerase subunit beta' (683 aa).

Positions 69, 71, 87, and 90 each coordinate Zn(2+). Residues Asp489, Asp491, and Asp493 each coordinate Mg(2+).

It belongs to the RNA polymerase beta' chain family. RpoC1 subfamily. As to quaternary structure, in plastids the minimal PEP RNA polymerase catalytic core is composed of four subunits: alpha, beta, beta', and beta''. When a (nuclear-encoded) sigma factor is associated with the core the holoenzyme is formed, which can initiate transcription. Requires Mg(2+) as cofactor. Zn(2+) serves as cofactor.

Its subcellular location is the plastid. The protein resides in the chloroplast. It catalyses the reaction RNA(n) + a ribonucleoside 5'-triphosphate = RNA(n+1) + diphosphate. DNA-dependent RNA polymerase catalyzes the transcription of DNA into RNA using the four ribonucleoside triphosphates as substrates. This chain is DNA-directed RNA polymerase subunit beta', found in Zea mays (Maize).